Consider the following 2245-residue polypeptide: Basic helix-loop-helix domain-containing protein USF3 (2245 aa).

The disordered stretch occupies residues 1–28 (MPEMTENETPTKKQHRKKNRETHNAVER). Positions 18–69 (KNRETHNAVERHRKKKINAGINRIGELIPCSPALKQSKNMILDQAFKYITEL) constitute a bHLH domain. The stretch at 77–112 (LLNGGNNEQAEEIKKLRKQLEEIQKENGRYIELLKA) forms a coiled coil. Disordered stretches follow at residues 271–290 (LHTC…QENP), 447–470 (SQTP…TSNH), 881–900 (SKSK…VTSE), 906–933 (AAKS…ALSD), 1015–1041 (KNPQ…IVDS), 1164–1238 (PSEA…SITS), 1307–1331 (IPNS…AKRA), 1460–1624 (IKQQ…VSGH), 1636–1664 (LEQQ…ERNR), 1736–1764 (TFKP…GNPV), 1777–1815 (ISQN…ENTC), 1834–1859 (GSQR…YNCP), and 1891–2031 (STLN…QPAT). Residues 273–288 (TCLNDQNSSENKNGQE) are compositionally biased toward polar residues. Low complexity predominate over residues 881-896 (SKSKSAEKSSPPSQES). Over residues 912-925 (STPNLQQETSQDKP) the composition is skewed to polar residues. 2 stretches are compositionally biased toward polar residues: residues 1185-1202 (GTGQ…QGSI) and 1219-1238 (IKTS…SITS). Residues 1319 to 1331 (PSHESRKDSAKRA) are compositionally biased toward basic and acidic residues. The segment covering 1462–1478 (QQQQQQQQQQQQQQQQQ) has biased composition (low complexity). Composition is skewed to polar residues over residues 1501-1520 (SVHS…QEVQ) and 1528-1538 (VQGTQTSQLSL). Residues 1560–1569 (QQMQQQMQQH) are compositionally biased toward low complexity. The span at 1570-1585 (FGSSQTEKSCENPSTS) shows a compositional bias: polar residues. Over residues 1593-1624 (QNHLNQDIMHQQQDVGSRQQGSGVSSEHVSGH) the composition is skewed to low complexity. The segment covering 1636-1654 (LEQQMVSQPSIVTRSSDMT) has biased composition (polar residues). 2 stretches are compositionally biased toward polar residues: residues 1904 to 1923 (GDIQ…SNPM) and 1998 to 2007 (SGNQRQSTVF).

The protein resides in the nucleus. Involved in the negative regulation of epithelial-mesenchymal transition, the process by which epithelial cells lose their polarity and adhesion properties to become mesenchymal cells with enhanced migration and invasive properties. This is Basic helix-loop-helix domain-containing protein USF3 from Homo sapiens (Human).